The following is a 64-amino-acid chain: Small ribosomal subunit protein bS21 (64 aa).

A disordered region spans residues 39 to 64 (EKPSVKRKKKALAAKKRAVKKARKSF). Residues 43-64 (VKRKKKALAAKKRAVKKARKSF) show a composition bias toward basic residues.

The protein belongs to the bacterial ribosomal protein bS21 family.

This is Small ribosomal subunit protein bS21 (rpsU) from Myxococcus xanthus.